A 430-amino-acid polypeptide reads, in one-letter code: Adenylosuccinate synthetase (430 aa).

GTP-binding positions include 12–18 and 40–42; these read GDEGKGK and GHT. The active-site Proton acceptor is the Asp-13. Mg(2+) contacts are provided by Asp-13 and Gly-40. Residues 13 to 16, 38 to 41, Thr-130, Arg-144, Gln-224, Thr-239, and Arg-303 contribute to the IMP site; these read DEGK and NAGH. The active-site Proton donor is His-41. Residue 299–305 coordinates substrate; that stretch reads VNTGRKR. GTP-binding positions include Arg-305, 331–333, and 413–415; these read KLD and STS.

Belongs to the adenylosuccinate synthetase family. As to quaternary structure, homodimer. The cofactor is Mg(2+).

The protein localises to the cytoplasm. It carries out the reaction IMP + L-aspartate + GTP = N(6)-(1,2-dicarboxyethyl)-AMP + GDP + phosphate + 2 H(+). It functions in the pathway purine metabolism; AMP biosynthesis via de novo pathway; AMP from IMP: step 1/2. Plays an important role in the de novo pathway of purine nucleotide biosynthesis. Catalyzes the first committed step in the biosynthesis of AMP from IMP. In Rhodopseudomonas palustris (strain BisB18), this protein is Adenylosuccinate synthetase.